A 426-amino-acid polypeptide reads, in one-letter code: 3-phosphoshikimate 1-carboxyvinyltransferase (426 aa).

Residues Lys20, Ser21, and Arg25 each coordinate 3-phosphoshikimate. Lys20 provides a ligand contact to phosphoenolpyruvate. Positions 92 and 120 each coordinate phosphoenolpyruvate. Residues Ser166, Gln168, Asp312, and Lys339 each contribute to the 3-phosphoshikimate site. Position 168 (Gln168) interacts with phosphoenolpyruvate. Asp312 serves as the catalytic Proton acceptor. Arg385 is a binding site for phosphoenolpyruvate.

It belongs to the EPSP synthase family. In terms of assembly, monomer.

The protein resides in the cytoplasm. It catalyses the reaction 3-phosphoshikimate + phosphoenolpyruvate = 5-O-(1-carboxyvinyl)-3-phosphoshikimate + phosphate. The protein operates within metabolic intermediate biosynthesis; chorismate biosynthesis; chorismate from D-erythrose 4-phosphate and phosphoenolpyruvate: step 6/7. Functionally, catalyzes the transfer of the enolpyruvyl moiety of phosphoenolpyruvate (PEP) to the 5-hydroxyl of shikimate-3-phosphate (S3P) to produce enolpyruvyl shikimate-3-phosphate and inorganic phosphate. In Streptococcus suis (strain 98HAH33), this protein is 3-phosphoshikimate 1-carboxyvinyltransferase.